Reading from the N-terminus, the 466-residue chain is tRNA modification GTPase MnmE (466 aa).

3 residues coordinate (6S)-5-formyl-5,6,7,8-tetrahydrofolate: R24, E85, and K128. The region spanning G224–G384 is the TrmE-type G domain. N234 is a K(+) binding site. GTP-binding positions include N234–S239, T253–T259, and D278–G281. S238 serves as a coordination point for Mg(2+). Positions 253, 255, and 258 each coordinate K(+). T259 contacts Mg(2+). (6S)-5-formyl-5,6,7,8-tetrahydrofolate is bound at residue K466.

The protein belongs to the TRAFAC class TrmE-Era-EngA-EngB-Septin-like GTPase superfamily. TrmE GTPase family. In terms of assembly, homodimer. Heterotetramer of two MnmE and two MnmG subunits. K(+) is required as a cofactor.

The protein localises to the cytoplasm. Functionally, exhibits a very high intrinsic GTPase hydrolysis rate. Involved in the addition of a carboxymethylaminomethyl (cmnm) group at the wobble position (U34) of certain tRNAs, forming tRNA-cmnm(5)s(2)U34. The polypeptide is tRNA modification GTPase MnmE (Herminiimonas arsenicoxydans).